Consider the following 649-residue polypeptide: L-ornithine N(5)-monooxygenase (649 aa).

FAD contacts are provided by residues 72–80 (EKRGHFAWH) and Gln91. Lys96 is a binding site for substrate. Val157 is an FAD binding site. NADP(+)-binding positions include 289 to 292 (AGQS) and Arg314. Substrate contacts are provided by residues 328 to 331 (NSAA) and Asn359. 359–361 (NYS) lines the NADP(+) pocket. The disordered stretch occupies residues 512-547 (AMQSDAVRSGKSSPGSGSDASSTSSQQTLASENSTE). The segment covering 520 to 536 (SGKSSPGSGSDASSTSS) has biased composition (low complexity). The span at 537–547 (QQTLASENSTE) shows a compositional bias: polar residues. 569-571 (SLL) serves as a coordination point for FAD. Ser572 is a binding site for substrate. The tract at residues 585 to 611 (LLQRLPRTRRGTASSAATQPAASTVAS) is disordered. Residues 596–611 (TASSAATQPAASTVAS) are compositionally biased toward low complexity.

Belongs to the lysine N(6)-hydroxylase/L-ornithine N(5)-oxygenase family. As to quaternary structure, homotetramer. The cofactor is FAD.

It catalyses the reaction L-ornithine + NADPH + O2 = N(5)-hydroxy-L-ornithine + NADP(+) + H2O. The enzyme catalyses L-ornithine + NADH + O2 = N(5)-hydroxy-L-ornithine + NAD(+) + H2O. It participates in siderophore biosynthesis; ferrichrome biosynthesis. Its function is as follows. Catalyzes the conversion of L-ornithine to N(5)-hydroxyornithine, the first step in the biosynthesis of all hydroxamate-containing siderophores, such as ferrichrome. The sequence is that of L-ornithine N(5)-monooxygenase (SID1) from Mycosarcoma maydis (Corn smut fungus).